A 450-amino-acid polypeptide reads, in one-letter code: Protein tweety homolog 1 (450 aa).

Residues 1–43 are Extracellular-facing; sequence MGAPPGYRPSAWVHLLHQLPRADFQLRPVPSVFAPQEQEYQQA. The chain crosses the membrane as a helical span at residues 44-64; that stretch reads LLLVAALAGLGLGLSLIFIAV. Over 65 to 88 the chain is Cytoplasmic; the sequence is YLIRFCCCRPPEPPGSKIPSPGGG. A helical transmembrane segment spans residues 89–109; sequence CVTWSCIVALLAGCTGIGIGF. Over 110 to 214 the chain is Extracellular; that stretch reads YGNSETSDGV…NVSFVEEYRW (105 aa). N-linked (GlcNAc...) asparagine glycans are attached at residues Asn-130 and Asn-205. A helical transmembrane segment spans residues 215–235; sequence LAYVLLLLLELLVCLFTLLGL. Residues 236 to 240 are Cytoplasmic-facing; it reads AKQSK. Residues 241–261 form a helical membrane-spanning segment; that stretch reads WLVIVMTVMSLLVLVLSWGSM. The Extracellular portion of the chain corresponds to 262–390; that stretch reads GLEAATAVGL…LRGLCEDALE (129 aa). Cystine bridges form between Cys-275–Cys-385 and Cys-303–Cys-370. Asn-284 and Asn-355 each carry an N-linked (GlcNAc...) asparagine glycan. Residues 391 to 411 form a helical membrane-spanning segment; that stretch reads GLLFLLLFSLLSAGALATALC. Over 412–450 the chain is Cytoplasmic; sequence SLPRAWALFPPSDDYDDTDDDDPFNPQESKRFVQWQSSI. Residues 428–450 form a disordered region; that stretch reads DTDDDDPFNPQESKRFVQWQSSI. Ser-440 is modified (phosphoserine).

Belongs to the tweety family. As to quaternary structure, homotetramer; disulfide-linked. Homodimer. N-glycosylated. Contains high-mannose, hybrid and complex oligosaccharides. In terms of tissue distribution, expressed in brain, eye, ovary and testis, and at lower levels in muscle, placenta, liver and lung.

The protein resides in the cell membrane. The enzyme catalyses chloride(in) = chloride(out). The catalysed reaction is L-glutamate(out) = L-glutamate(in). Functionally, calcium-independent, swelling-dependent volume-regulated anion channel (VRAC-swell) which plays a pivotal role in the process of regulatory volume decrease (RVD) in the brain through the efflux of anions like chloride and organic osmolytes like glutamate. In terms of biological role, ca(2+)-independent, swelling-activated chloride channel, possibly involved in regulation of cell volume. The sequence is that of Protein tweety homolog 1 (TTYH1) from Homo sapiens (Human).